The sequence spans 77 residues: Sec-independent protein translocase protein TatA (77 aa).

Residues 1–21 traverse the membrane as a helical segment; the sequence is MGSFSIWHWLIVLVIVMLVFG. Residues 50–77 form a disordered region; the sequence is ADASTQQKISGGQTLEGEAREKVEKTHS. Over residues 53 to 62 the composition is skewed to polar residues; that stretch reads STQQKISGGQ. Basic and acidic residues predominate over residues 66-77; it reads GEAREKVEKTHS.

It belongs to the TatA/E family. As to quaternary structure, the Tat system comprises two distinct complexes: a TatABC complex, containing multiple copies of TatA, TatB and TatC subunits, and a separate TatA complex, containing only TatA subunits. Substrates initially bind to the TatABC complex, which probably triggers association of the separate TatA complex to form the active translocon.

The protein resides in the cell inner membrane. Part of the twin-arginine translocation (Tat) system that transports large folded proteins containing a characteristic twin-arginine motif in their signal peptide across membranes. TatA could form the protein-conducting channel of the Tat system. This is Sec-independent protein translocase protein TatA from Azoarcus sp. (strain BH72).